We begin with the raw amino-acid sequence, 473 residues long: Ribulose bisphosphate carboxylase large chain (473 aa).

The propeptide occupies 1–2; it reads MS. An N-acetylproline modification is found at Pro-3. Lys-14 is subject to N6,N6,N6-trimethyllysine. Positions 123 and 173 each coordinate substrate. Catalysis depends on Lys-175, which acts as the Proton acceptor. Substrate is bound at residue Lys-177. Mg(2+)-binding residues include Lys-201, Asp-203, and Glu-204. Lys-201 is subject to N6-carboxylysine. Catalysis depends on His-294, which acts as the Proton acceptor. Substrate-binding residues include Arg-295, His-327, and Ser-379.

It belongs to the RuBisCO large chain family. Type I subfamily. Heterohexadecamer of 8 large chains and 8 small chains; disulfide-linked. The disulfide link is formed within the large subunit homodimers. The cofactor is Mg(2+). Post-translationally, the disulfide bond which can form in the large chain dimeric partners within the hexadecamer appears to be associated with oxidative stress and protein turnover.

It localises to the plastid. Its subcellular location is the chloroplast. The enzyme catalyses 2 (2R)-3-phosphoglycerate + 2 H(+) = D-ribulose 1,5-bisphosphate + CO2 + H2O. The catalysed reaction is D-ribulose 1,5-bisphosphate + O2 = 2-phosphoglycolate + (2R)-3-phosphoglycerate + 2 H(+). RuBisCO catalyzes two reactions: the carboxylation of D-ribulose 1,5-bisphosphate, the primary event in carbon dioxide fixation, as well as the oxidative fragmentation of the pentose substrate in the photorespiration process. Both reactions occur simultaneously and in competition at the same active site. This chain is Ribulose bisphosphate carboxylase large chain, found in Vigna unguiculata (Cowpea).